The chain runs to 132 residues: Protein C10 (132 aa).

Position 2 is an N-acetylalanine (alanine 2).

Belongs to the UPF0456 family.

It localises to the cytoplasm. Functionally, in brain, may be required for corpus callosum development. The chain is Protein C10 from Bos taurus (Bovine).